An 83-amino-acid polypeptide reads, in one-letter code: Cytochrome c oxidase subunit 7A2, mitochondrial (83 aa).

A mitochondrion-targeting transit peptide spans 1–23; that stretch reads MLRNLLALRQIAKRTISTSSRRQ. Residues 24–48 lie on the Mitochondrial matrix side of the membrane; that stretch reads FENKVPEKQKLFQEDNGIPVHLKGG. Residue lysine 33 is modified to N6-acetyllysine. Residues 49–77 traverse the membrane as a helical segment; that stretch reads IADALLYRATLILTVGGTAYAMYELAVAS. Topologically, residues 78 to 83 are mitochondrial intermembrane; it reads FPKKQD.

This sequence belongs to the cytochrome c oxidase VIIa family. As to quaternary structure, component of the cytochrome c oxidase (complex IV, CIV), a multisubunit enzyme composed of 14 subunits. The complex is composed of a catalytic core of 3 subunits MT-CO1, MT-CO2 and MT-CO3, encoded in the mitochondrial DNA, and 11 supernumerary subunits COX4I1 (or COX4I2), COX5A, COX5B, COX6A2 (or COX6A1), COX6B1 (or COX6B2), COX6C, COX7A1 (or COX7A2), COX7B, COX7C, COX8B and NDUFA4, which are encoded in the nuclear genome. The complex exists as a monomer or a dimer and forms supercomplexes (SCs) in the inner mitochondrial membrane with NADH-ubiquinone oxidoreductase (complex I, CI) and ubiquinol-cytochrome c oxidoreductase (cytochrome b-c1 complex, complex III, CIII), resulting in different assemblies (supercomplex SCI(1)III(2)IV(1) and megacomplex MCI(2)III(2)IV(2)). Interacts with PET100.

The protein localises to the mitochondrion inner membrane. It participates in energy metabolism; oxidative phosphorylation. Its function is as follows. Component of the cytochrome c oxidase, the last enzyme in the mitochondrial electron transport chain which drives oxidative phosphorylation. The respiratory chain contains 3 multisubunit complexes succinate dehydrogenase (complex II, CII), ubiquinol-cytochrome c oxidoreductase (cytochrome b-c1 complex, complex III, CIII) and cytochrome c oxidase (complex IV, CIV), that cooperate to transfer electrons derived from NADH and succinate to molecular oxygen, creating an electrochemical gradient over the inner membrane that drives transmembrane transport and the ATP synthase. Cytochrome c oxidase is the component of the respiratory chain that catalyzes the reduction of oxygen to water. Electrons originating from reduced cytochrome c in the intermembrane space (IMS) are transferred via the dinuclear copper A center (CU(A)) of subunit 2 and heme A of subunit 1 to the active site in subunit 1, a binuclear center (BNC) formed by heme A3 and copper B (CU(B)). The BNC reduces molecular oxygen to 2 water molecules using 4 electrons from cytochrome c in the IMS and 4 protons from the mitochondrial matrix. The chain is Cytochrome c oxidase subunit 7A2, mitochondrial (COX7A2) from Bos taurus (Bovine).